A 249-amino-acid polypeptide reads, in one-letter code: ATP synthase subunit a, chloroplastic (249 aa).

Helical transmembrane passes span 38 to 58 (GQVL…SVIA), 97 to 117 (VPFV…GALI), 136 to 156 (INTT…AGLS), 201 to 221 (LVVA…MMLL), and 222 to 242 (GLFT…AYIG).

Belongs to the ATPase A chain family. In terms of assembly, F-type ATPases have 2 components, CF(1) - the catalytic core - and CF(0) - the membrane proton channel. CF(1) has five subunits: alpha(3), beta(3), gamma(1), delta(1), epsilon(1). CF(0) has four main subunits: a, b, b' and c.

Its subcellular location is the plastid. The protein resides in the chloroplast thylakoid membrane. Functionally, key component of the proton channel; it plays a direct role in the translocation of protons across the membrane. The polypeptide is ATP synthase subunit a, chloroplastic (Chlorokybus atmophyticus (Soil alga)).